Here is a 254-residue protein sequence, read N- to C-terminus: MAIANKNIIFVAGLGGIGLDTSREIVKSGPKNLVILDRIDNPAAIAELKAINPKVTITFYPYDVTVSVAESTKLLKVIFDKLKTVDLLINGAGILDDYQIERTIAVNFAGTVNTTTAIMAFWDKRKGGPGGVIANICSVTGFNAIYQVPVYSASKAAALSFTNSLAKLAPITGVTAYSINPGITKTTLVHKFNSWLDVEPRVAELLLEHPTQTTLQCAQNFVKAIEANKNGAIWKLDLGRLDAIEWTKHWDSGI.

10-33 (FVAGLGGIGLDTSREIVKSGPKNL) is an NAD(+) binding site. S138 serves as a coordination point for substrate. Catalysis depends on Y151, which acts as the Proton acceptor.

It belongs to the short-chain dehydrogenases/reductases (SDR) family. In terms of assembly, homodimer.

The enzyme catalyses a primary alcohol + NAD(+) = an aldehyde + NADH + H(+). The catalysed reaction is a secondary alcohol + NAD(+) = a ketone + NADH + H(+). In Drosophila hydei (Fruit fly), this protein is Alcohol dehydrogenase 2 (Adh2).